The following is a 363-amino-acid chain: MSDVERTEFEIPGGIPPRRNGGQGRAADTNVDANLKPDEYDAEVTLRPKSLTEFIGQPKVRDQLSLVLTGAKNRGVVPDHVLLSGPPGLGKTTMAMIIAQELGTSLRMTSGPALERAGDLAAMLSNLMEGDVLFIDEIHRIARPAEEMLYMAMEDFRIDVIVGKGPGATSIPLEIPPFTLVGATTRSGMLTGPLRDRFGFTAQMEFYDVPDLTKVVKRTAKILDVGIDNDAAVEIASRSRGTPRIANRLLRRVRDFAEVHADGHITMGAANAALIVFDVDEVGLDRLDRAVLDALIRGHGGGPVGVNTLAVAVGEEPGTVEEVCEPYLVRAGMIARTGRGRVATAAAWRHLGLEPPEGTIGDY.

A disordered region spans residues 1 to 32 (MSDVERTEFEIPGGIPPRRNGGQGRAADTNVD). The tract at residues 27–207 (ADTNVDANLK…FGFTAQMEFY (181 aa)) is large ATPase domain (RuvB-L). Residues L46, R47, G88, K91, T92, T93, 154-156 (EDF), R197, Y207, and R244 each bind ATP. Position 92 (T92) interacts with Mg(2+). The interval 208–278 (DVPDLTKVVK…AANAALIVFD (71 aa)) is small ATPAse domain (RuvB-S). The interval 281-363 (EVGLDRLDRA…EPPEGTIGDY (83 aa)) is head domain (RuvB-H). DNA is bound by residues R336 and R341.

It belongs to the RuvB family. In terms of assembly, homohexamer. Forms an RuvA(8)-RuvB(12)-Holliday junction (HJ) complex. HJ DNA is sandwiched between 2 RuvA tetramers; dsDNA enters through RuvA and exits via RuvB. An RuvB hexamer assembles on each DNA strand where it exits the tetramer. Each RuvB hexamer is contacted by two RuvA subunits (via domain III) on 2 adjacent RuvB subunits; this complex drives branch migration. In the full resolvosome a probable DNA-RuvA(4)-RuvB(12)-RuvC(2) complex forms which resolves the HJ.

It localises to the cytoplasm. The enzyme catalyses ATP + H2O = ADP + phosphate + H(+). The RuvA-RuvB-RuvC complex processes Holliday junction (HJ) DNA during genetic recombination and DNA repair, while the RuvA-RuvB complex plays an important role in the rescue of blocked DNA replication forks via replication fork reversal (RFR). RuvA specifically binds to HJ cruciform DNA, conferring on it an open structure. The RuvB hexamer acts as an ATP-dependent pump, pulling dsDNA into and through the RuvAB complex. RuvB forms 2 homohexamers on either side of HJ DNA bound by 1 or 2 RuvA tetramers; 4 subunits per hexamer contact DNA at a time. Coordinated motions by a converter formed by DNA-disengaged RuvB subunits stimulates ATP hydrolysis and nucleotide exchange. Immobilization of the converter enables RuvB to convert the ATP-contained energy into a lever motion, pulling 2 nucleotides of DNA out of the RuvA tetramer per ATP hydrolyzed, thus driving DNA branch migration. The RuvB motors rotate together with the DNA substrate, which together with the progressing nucleotide cycle form the mechanistic basis for DNA recombination by continuous HJ branch migration. Branch migration allows RuvC to scan DNA until it finds its consensus sequence, where it cleaves and resolves cruciform DNA. This Corynebacterium glutamicum (strain R) protein is Holliday junction branch migration complex subunit RuvB.